Reading from the N-terminus, the 68-residue chain is Wasabi receptor toxin (68 aa).

Positions 1–21 (MKYFTLALTLLFLLLINPCKD) are cleaved as a signal peptide. A propeptide spanning residues 22 to 35 (MNFAWAESSEKVER) is cleaved from the precursor. 2 disulfides stabilise this stretch: cysteine 44/cysteine 62 and cysteine 48/cysteine 58.

This sequence belongs to the short scorpion toxin superfamily. Potassium channel inhibitor kappa-KTx family. Kappa-KTx 1 subfamily. Monomer. In terms of tissue distribution, expressed by the venom gland.

It is found in the secreted. The protein resides in the host cytoplasm. Cell-penetrating peptide (CPP) with defensive purpose that induces pain by specifically activating mammalian sensory neuron TRPA1 channels. It non-covalently binds to the same region than other TRPA1 agonists (irritants), but acts via a distinct biochemical mechanism. Its binding stabilizes the TRPA1 open state and diminishes calcium-permeability. Consequently, it produces pain and pain hypersensitivity, but fails to trigger efferent release of neuropeptides (CGRP) and neurogenic inflammation typically produced by noxious electrophiles. Is not active on voltage-gated potassium channels and other TRP channels. The protein is Wasabi receptor toxin of Urodacus manicatus (Black rock scorpion).